Here is a 493-residue protein sequence, read N- to C-terminus: High affinity nitrate transporter 2.7 (493 aa).

The segment covering 1-19 (MEPSQRNTKPPSFSDSTIP) has biased composition (polar residues). A disordered region spans residues 1–20 (MEPSQRNTKPPSFSDSTIPV). A run of 12 helical transmembrane segments spans residues 46-66 (WLSL…VPVI), 70-90 (LNLS…GSIF), 113-133 (FLTA…SFIL), 136-156 (FFVG…SSMF), 174-194 (VGAG…AEFL), 202-222 (VSFV…LLYG), 257-277 (FVEI…ALLY), 299-319 (FGVN…SNIA), 341-361 (LWGL…LGRV), 368-388 (ILVM…VFGV), 400-420 (VAGI…FLLF), and 431-451 (ISLM…IYFP).

This sequence belongs to the major facilitator superfamily. Nitrate/nitrite porter (TC 2.A.1.8) family. In terms of tissue distribution, expressed in seeds, leaves and shoots. Lower expression in roots.

It localises to the vacuole membrane. In terms of biological role, involved in high-affinity nitrate transport. Controls nitrate content in seeds. The protein is High affinity nitrate transporter 2.7 (NRT2.7) of Arabidopsis thaliana (Mouse-ear cress).